A 77-amino-acid chain; its full sequence is Large ribosomal subunit protein eL20 (77 aa).

The protein belongs to the eukaryotic ribosomal protein eL20 family. In terms of assembly, part of the 50S ribosomal subunit. Binds 23S rRNA.

The chain is Large ribosomal subunit protein eL20 from Thermococcus onnurineus (strain NA1).